A 795-amino-acid chain; its full sequence is Phenylalanine--tRNA ligase beta subunit (795 aa).

In terms of domain architecture, tRNA-binding spans 39–148 (AGEFTGVKVG…EGTTLGADVR (110 aa)). Positions 401–476 (PKANTVELRR…RIYGYNNIPN (76 aa)) constitute a B5 domain. The Mg(2+) site is built by Asp454, Asp460, Glu463, and Glu464. Residues 701-794 (SKFPANRRDI…IGEKFSATLR (94 aa)) form the FDX-ACB domain.

It belongs to the phenylalanyl-tRNA synthetase beta subunit family. Type 1 subfamily. Tetramer of two alpha and two beta subunits. Requires Mg(2+) as cofactor.

The protein localises to the cytoplasm. It carries out the reaction tRNA(Phe) + L-phenylalanine + ATP = L-phenylalanyl-tRNA(Phe) + AMP + diphosphate + H(+). The chain is Phenylalanine--tRNA ligase beta subunit from Aliivibrio fischeri (strain ATCC 700601 / ES114) (Vibrio fischeri).